A 425-amino-acid chain; its full sequence is Histidine--tRNA ligase (425 aa).

Belongs to the class-II aminoacyl-tRNA synthetase family. Homodimer.

Its subcellular location is the cytoplasm. It carries out the reaction tRNA(His) + L-histidine + ATP = L-histidyl-tRNA(His) + AMP + diphosphate + H(+). This is Histidine--tRNA ligase from Erwinia tasmaniensis (strain DSM 17950 / CFBP 7177 / CIP 109463 / NCPPB 4357 / Et1/99).